We begin with the raw amino-acid sequence, 226 residues long: Octanoyltransferase (226 aa).

Residues glycine 37 to glutamate 220 form the BPL/LPL catalytic domain. Substrate is bound by residues arginine 76 to histidine 83, alanine 151 to glycine 153, and glycine 164 to serine 166. Cysteine 182 (acyl-thioester intermediate) is an active-site residue.

This sequence belongs to the LipB family.

It is found in the cytoplasm. The enzyme catalyses octanoyl-[ACP] + L-lysyl-[protein] = N(6)-octanoyl-L-lysyl-[protein] + holo-[ACP] + H(+). It functions in the pathway protein modification; protein lipoylation via endogenous pathway; protein N(6)-(lipoyl)lysine from octanoyl-[acyl-carrier-protein]: step 1/2. In terms of biological role, catalyzes the transfer of endogenously produced octanoic acid from octanoyl-acyl-carrier-protein onto the lipoyl domains of lipoate-dependent enzymes. Lipoyl-ACP can also act as a substrate although octanoyl-ACP is likely to be the physiological substrate. This Caulobacter vibrioides (strain ATCC 19089 / CIP 103742 / CB 15) (Caulobacter crescentus) protein is Octanoyltransferase.